The sequence spans 322 residues: Corticotropin-releasing factor-binding protein (322 aa).

The signal sequence occupies residues 1–24 (MSPNFKLQCHFILIFLTALRGESR). 5 disulfides stabilise this stretch: Cys-60–Cys-81, Cys-104–Cys-141, Cys-183–Cys-205, Cys-237–Cys-264, and Cys-277–Cys-318. An N-linked (GlcNAc...) asparagine glycan is attached at Asn-204.

The protein belongs to the CRF-binding protein family.

It is found in the secreted. Binds CRF and inactivates it. May prevent inappropriate pituitary-adrenal stimulation in pregnancy. This is Corticotropin-releasing factor-binding protein (CRHBP) from Homo sapiens (Human).